The sequence spans 201 residues: Ribonuclease HII (201 aa).

Positions 14–201 constitute an RNase H type-2 domain; it reads NLIAGVDEVG…KPVKRILGIE (188 aa). Residues aspartate 20, glutamate 21, and aspartate 112 each coordinate a divalent metal cation.

This sequence belongs to the RNase HII family. Requires Mn(2+) as cofactor. It depends on Mg(2+) as a cofactor.

The protein localises to the cytoplasm. The enzyme catalyses Endonucleolytic cleavage to 5'-phosphomonoester.. Endonuclease that specifically degrades the RNA of RNA-DNA hybrids. This is Ribonuclease HII from Photobacterium profundum (strain SS9).